A 561-amino-acid polypeptide reads, in one-letter code: MAASAKRKQEEKHLKMLRDMTGLPHNRKCFDCDQRGPTYVNMTVGSFVCTSCSGSLRGLNPPHRVKSISMTTFTQQEIEFLQKHGNEVCKQIWLGLFDDRSSAIPDFRDPQKVKEFLQEKYEKKRWYVPPEQAKVVASVHASISGSSASSTSSTPEVKPLKSLLGESAPALHLNKGTPSQSPVVGRSQGQQQEKKQFDLLSDLGSDIFAAPAPQSTATANFANFAHFNSHAAQNSANADFANFDAFGQSSGSSNFGGFPTASHSSFQPQTTGGSAGSVNANFAHFDNFPKSSSADFGTFSTSQSHQTASTVSKVSTNKAGLQTADKYAALANLDNIFSAGQGGDQGSGFGTTGKAPVGSVVSVPSHSSASSDKYAALAELDSVFSSAATSSNAYTPTSNASSSVFGTVPVGASAQTQPASSGPAPFGATPSTNPFVAATGPSAASSTNPFQTNARGATAATFGTASMSMPAGFGTPAQYSLPTSFSGSFQQPAFPAQAAFPQQTAFSQQPNGAGFATFGQTKPVVTPFGQVAAAGVSSNPFMTGAPTGQLPTGSSSTNPFL.

The 125-residue stretch at 11–135 (EKHLKMLRDM…WYVPPEQAKV (125 aa)) folds into the Arf-GAP domain. Residues 29–52 (CFDCDQRGPTYVNMTVGSFVCTSC) form a C4-type zinc finger. Serine 167 is modified (phosphoserine). Residues 170–193 (ALHLNKGTPSQSPVVGRSQGQQQE) are disordered. Polar residues predominate over residues 176-191 (GTPSQSPVVGRSQGQQ). Position 177 is a phosphothreonine (threonine 177). 2 positions are modified to phosphoserine: serine 181 and serine 362. Serine 367 carries an O-linked (GlcNAc) serine glycan. The disordered stretch occupies residues 413 to 433 (SAQTQPASSGPAPFGATPSTN).

Interacts with FCHO1. Interacts with EPS15R and EPS15. In terms of processing, O-glycosylated. Expressed in the testes (at protein level).

The protein resides in the nucleus. The protein localises to the cytoplasmic vesicle. Required for vesicle docking or fusion during acrosome biogenesis. May play a role in RNA trafficking or localization. In Mus musculus (Mouse), this protein is Arf-GAP domain and FG repeat-containing protein 1 (Agfg1).